Here is a 255-residue protein sequence, read N- to C-terminus: Venom allergen-1 (255 aa).

Positions 1-21 are cleaved as a signal peptide; that stretch reads MASHVIVKFITAAILIGSCYA. Residues 65-210 enclose the SCP domain; it reads LKKHNELRAE…VIKYYLVCNY (146 aa). N-linked (GlcNAc...) asparagine glycans are attached at residues Asn146 and Asn209.

This sequence belongs to the CRISP family. As to quaternary structure, interacts with human LRPPRC; the interaction interrupts association between BECN1 and LRPPRC. Interacts with human CD4. In terms of assembly, (Microbial infection) Interacts with Zika virus envelope protein E and Zika virus-like particles; the interaction does not affect Zika virus replication in human endothelial cells and keratinocytes. Saliva (at protein level). Female salivary gland. No or low-level expression in female hemolymph, midgut, Malpighian tubule system and ovary. No or low-level expression in male tissues.

It is found in the secreted. It localises to the host endosome. Its subcellular location is the host mitochondrion. Activates autophagy in human monocytic cells, dendritic cells and macrophages. Promotes activation of human CD4(+) T-cells. Does not affect cytokine expression in human monocytic cells. Functionally, (Microbial infection) Promotes dengue virus type 2 replication in human monocytic cells, dendritic cells and macrophages. Pro-viral properties are linked to BECN1-mediated autophagy activation in the host. Does not directly interact with the purified envelope protein of dengue virus type 2. In terms of biological role, (Microbial infection) Promotes Zika virus replication in human monocytic cells, dendritic cells and macrophages. Facilitates Zika virus transmission from infected mosquitoes to the host in mouse model. Pro-viral properties are linked to BECN1-mediated autophagy activation in the host. Does not affect Zika virus replication in human endothelial cells and keratinocytes. Its function is as follows. (Microbial infection) Promotes Semliki Forest virus replication in human monocytic cells. (Microbial infection) Does not influence Batai virus replication in human monocytic cells. This chain is Venom allergen-1, found in Aedes aegypti (Yellowfever mosquito).